The following is a 297-amino-acid chain: MKKGKMIIISGPSGVGKGSVNGELLQNPDLHLRYSVSMTTRKPRNGEVDGVNYFFVSNEEFAKAIVNDELIEYAHFVGNSYGTPRKYVEQELKKGNNVILEIEVDGATQVLNKEPNVLSIFLMPPNPTELANRIRGRQTEDEEKIKARLDKALLEIPLKHNYQYVIENDNVPNAVAKITDVLHLEGLTDIKTPTVYERLEQIVEQIVKEKYMYFVNNWETNVKLLAKNEEEKNKAKNFDAETYLIKLLTKKVYHKVLGHGDFSKLLDKDFVDFKIQKLMFKINFFSVEQKHYNNDEF.

The 180-residue stretch at 4 to 183 folds into the Guanylate kinase-like domain; sequence GKMIIISGPS…AVAKITDVLH (180 aa). Position 11–18 (11–18) interacts with ATP; that stretch reads GPSGVGKG. A unknown region spans residues 204–297; the sequence is EQIVKEKYMY…EQKHYNNDEF (94 aa).

The protein belongs to the guanylate kinase family.

It localises to the cytoplasm. The enzyme catalyses GMP + ATP = GDP + ADP. Functionally, essential for recycling GMP and indirectly, cGMP. This chain is Guanylate kinase (gmk), found in Mycoplasma mycoides subsp. mycoides SC (strain CCUG 32753 / NCTC 10114 / PG1).